A 90-amino-acid polypeptide reads, in one-letter code: Leech factor Xa inhibitor (90 aa).

The protein localises to the secreted. In terms of biological role, potent anticoagulant inhibiting the amidolytic activity of factor Xa (F10) (Ki=4nM) and reducing its ability to activate prothrombin (F2) in the prothrombinase complex (EC(50)=40nM). This Haementeria depressa (Leech) protein is Leech factor Xa inhibitor.